Reading from the N-terminus, the 365-residue chain is G-protein coupled receptor 4 (365 aa).

Over 1 to 10 (MDNSTGTWEG) the chain is Extracellular. A glycan (N-linked (GlcNAc...) asparagine) is linked at asparagine 3. Residues 11 to 47 (CHVDSRVDHLFPPSLYIFVIGVGLPTNCLALWAAYRQ) form a helical membrane-spanning segment. 2 disulfide bridges follow: cysteine 11–cysteine 260 and cysteine 92–cysteine 170. The Cytoplasmic segment spans residues 48–51 (VRQR). Residues 52 to 82 (NELGVYLMNLSIADLLYICTLPLWVDYFLHH) form a helical membrane-spanning segment. The Extracellular segment spans residues 83 to 87 (DNWIH). Residues 88-123 (GPGSCKLFGFIFYSNIYISIAFLCCISVDRYLAVAH) traverse the membrane as a helical segment. The Cytoplasmic segment spans residues 124–131 (PLRFARLR). The helical transmembrane segment at 132–158 (RVKTAVAVSSVVWATELGANSAPLFHD) threads the bilayer. The Extracellular portion of the chain corresponds to 159–174 (ELFRDRYNHTFCFEKF). Residues 159–174 (ELFRDRYNHTFCFEKF) form an extracellular loop 2 (ECL2) region. N-linked (GlcNAc...) asparagine glycosylation is present at asparagine 166. Residues 175-212 (PMERWVAWMNLYRVFVGFLFPWALMLLCYRGILRAVQS) traverse the membrane as a helical segment. Over 213–216 (SVST) the chain is Cytoplasmic. A helical membrane pass occupies residues 217 to 252 (ERQEKVKIKRLALSLIAIVLVCFAPYHALLLSRSAV). Over 253-262 (YLGRPWDCGF) the chain is Extracellular. The chain crosses the membrane as a helical span at residues 263 to 291 (EERVFSAYHSSLAFTSLNCVADPILYCLV). Residues 292 to 365 (NEGARSDVAK…PLKVLLPPAQ (74 aa)) are Cytoplasmic-facing.

The protein belongs to the G-protein coupled receptor 1 family.

It is found in the cell membrane. With respect to regulation, activated by a network of residues that connects an extracellular-facing cavity to Glu-147, a conserved charged residue buried in the transmembrane core of the receptor. Protonation likely drives conformational changes in extracellular loop 2 (ECL2), which stabilizes movement of transmembrane 3 (TM3) and a series of rearrangements that connect the extracellular-facing cavity to Glu-147, a residue only conserved in proton-sensing G-protein coupled receptors. Functionally, proton-sensing G-protein coupled receptor activated by extracellular pH, which is required to monitor pH changes and generate adaptive reactions. Activated by an optimal pH of 6.8-7.2. Ligand binding causes a conformation change that triggers signaling via guanine nucleotide-binding proteins (G proteins) and modulates the activity of downstream effectors, such as adenylate cyclase. GPR4 is mainly coupled to G(s) G proteins and mediates activation of adenylate cyclase activity. May also couple with G(q) and G(12)/G(13) G proteins. Acts as a key regulator of respiratory sensitivity to CO2/H(+) in brain retrotrapezoid nucleus neurons: acts by mediating detection of protons generated by the formation of carbonic acid in the blood, an important mechanism to impulse to breathe. Also acts as a regulator of acid secretion in the kidney collecting duct by maintaining acid-base homeostasis in the kidney. Acidosis-induced GPR4 activation increases paracellular gap formation and permeability of vascular endothelial cells, possibly through the G(12)/G(13)/Rho GTPase signaling pathway. The polypeptide is G-protein coupled receptor 4 (Rattus norvegicus (Rat)).